The sequence spans 195 residues: Imidazoleglycerol-phosphate dehydratase (195 aa).

The protein belongs to the imidazoleglycerol-phosphate dehydratase family.

It is found in the cytoplasm. The catalysed reaction is D-erythro-1-(imidazol-4-yl)glycerol 3-phosphate = 3-(imidazol-4-yl)-2-oxopropyl phosphate + H2O. Its pathway is amino-acid biosynthesis; L-histidine biosynthesis; L-histidine from 5-phospho-alpha-D-ribose 1-diphosphate: step 6/9. The protein is Imidazoleglycerol-phosphate dehydratase of Methylobacterium radiotolerans (strain ATCC 27329 / DSM 1819 / JCM 2831 / NBRC 15690 / NCIMB 10815 / 0-1).